The sequence spans 376 residues: Anhydro-N-acetylmuramic acid kinase (376 aa).

An ATP-binding site is contributed by 22 to 29; it reads GTSMDGAD.

Belongs to the anhydro-N-acetylmuramic acid kinase family.

It catalyses the reaction 1,6-anhydro-N-acetyl-beta-muramate + ATP + H2O = N-acetyl-D-muramate 6-phosphate + ADP + H(+). It participates in amino-sugar metabolism; 1,6-anhydro-N-acetylmuramate degradation. Its pathway is cell wall biogenesis; peptidoglycan recycling. Its function is as follows. Catalyzes the specific phosphorylation of 1,6-anhydro-N-acetylmuramic acid (anhMurNAc) with the simultaneous cleavage of the 1,6-anhydro ring, generating MurNAc-6-P. Is required for the utilization of anhMurNAc either imported from the medium or derived from its own cell wall murein, and thus plays a role in cell wall recycling. The sequence is that of Anhydro-N-acetylmuramic acid kinase from Neisseria gonorrhoeae (strain NCCP11945).